Here is a 115-residue protein sequence, read N- to C-terminus: Beta-2-microglobulin (115 aa).

Residues 1-16 form the signal peptide; sequence MKIALVLLSLLALTLA. Positions 22-113 constitute an Ig-like C1-type domain; sequence PPVVKVYTAE…GNPSKKYRLD (92 aa).

It belongs to the beta-2-microglobulin family. As to quaternary structure, heterodimer of an alpha chain and a beta chain. Beta-2-microglobulin is the beta-chain of major histocompatibility complex class I molecules.

It localises to the secreted. In terms of biological role, component of the class I major histocompatibility complex (MHC). Involved in the presentation of peptide antigens to the immune system. The polypeptide is Beta-2-microglobulin (b2m) (Xenopus laevis (African clawed frog)).